The sequence spans 121 residues: CRISPR system Cms protein Csm2 (121 aa).

The protein belongs to the CRISPR-associated Csm2 family. Part of the Csm effector complex that includes at least Cas10(1), Csm2(3), Csm3(5), Csm4(1), Csm5(1) and mature crRNA. The Csm complex is elongated and slightly twisted with a maximal length of 215 Angstroms and a diameter of 75-80 Angstroms. It has been modeled to have a central protein filamant of Csm3 subunits along which the dsRNA helix of paired crRNA and target RNA binds. The filament is capped at one end by Cas10 and Csm4 and at the other end by Csm5; ssDNA is thought to bind to the N-terminal HD domain of Cas10. Csm with a precursor crRNA does not include Csm5, while Cas6, the enzyme probably involved in pre-crRNA processing, is found associated with a subset of the Csm complex.

In terms of biological role, CRISPR (clustered regularly interspaced short palindromic repeat) is an adaptive immune system that provides protection against mobile genetic elements (viruses, transposable elements and conjugative plasmids). CRISPR clusters contain spacers, sequences complementary to antecedent mobile elements, and target invading nucleic acids. CRISPR clusters are transcribed and processed into CRISPR RNA (crRNA). The type III-A Csm effector complex binds crRNA and acts as a crRNA-guided RNase, DNase and cyclic oligoadenylate synthase; binding of target RNA cognate to the crRNA is required for all activities. In a heterologous host this Csm effector complex restricts ssRNA phage MS2, suggesting it may target RNA viruses in vivo. Functionally, csm functions as a non-specific ssDNase. Base-pairing between crRNA and target RNA to form a ternary Csm complex activates a ssDNase activity; target RNA cleavage suppresses the ssDNase, a temporal control that prevents uncontrolled DNA degradation. Viral RNA transcripts probably tether the Csm complex to the viral genome, recruiting Cas10 ssDNA activity which is able to degrade DNA in the transcription bubble, spatially controlling the DNase activity. Its function is as follows. This subunit may be involved in monitoring complementarity of crRNA and target RNA. This chain is CRISPR system Cms protein Csm2, found in Streptococcus thermophilus.